The sequence spans 490 residues: Cytochrome P450 2C39 (490 aa).

A signal peptide spans 1–25; it reads MDLVTFLVLTLSSLILLSLWRQSCG. Position 435 (cysteine 435) interacts with heme.

It belongs to the cytochrome P450 family. The cofactor is heme. In terms of tissue distribution, liver.

The protein resides in the endoplasmic reticulum membrane. Its subcellular location is the microsome membrane. The enzyme catalyses an organic molecule + reduced [NADPH--hemoprotein reductase] + O2 = an alcohol + oxidized [NADPH--hemoprotein reductase] + H2O + H(+). It catalyses the reaction (5Z,8Z,11Z,14Z)-eicosatetraenoate + reduced [NADPH--hemoprotein reductase] + O2 = 11,12-epoxy-(5Z,8Z,14Z)-eicosatrienoate + oxidized [NADPH--hemoprotein reductase] + H2O + H(+). It carries out the reaction (5Z,8Z,11Z,14Z)-eicosatetraenoate + reduced [NADPH--hemoprotein reductase] + O2 = 14,15-epoxy-(5Z,8Z,11Z)-eicosatrienoate + oxidized [NADPH--hemoprotein reductase] + H2O + H(+). It participates in lipid metabolism; arachidonate metabolism. In terms of biological role, a cytochrome P450 monooxygenase that primarily catalyzes the epoxidation of 11,12 and 14,15 double bonds of (5Z,8Z,11Z,14Z)-eicosatetraenoic acid (arachidonate) forming 11,12- and 14,15-epoxyeicosatrienoic acids (11,12- and 14,15-EET) regioisomers. Mechanistically, uses molecular oxygen inserting one oxygen atom into a substrate, and reducing the second into a water molecule, with two electrons provided by NADPH via cytochrome P450 reductase (CPR; NADPH--hemoprotein reductase). This Mus musculus (Mouse) protein is Cytochrome P450 2C39.